Consider the following 1380-residue polypeptide: DNA-directed RNA polymerase subunit beta (1380 aa).

The protein belongs to the RNA polymerase beta chain family. As to quaternary structure, the RNAP catalytic core consists of 2 alpha, 1 beta, 1 beta' and 1 omega subunit. When a sigma factor is associated with the core the holoenzyme is formed, which can initiate transcription.

The catalysed reaction is RNA(n) + a ribonucleoside 5'-triphosphate = RNA(n+1) + diphosphate. Its function is as follows. DNA-dependent RNA polymerase catalyzes the transcription of DNA into RNA using the four ribonucleoside triphosphates as substrates. The sequence is that of DNA-directed RNA polymerase subunit beta from Rhizobium rhizogenes (strain K84 / ATCC BAA-868) (Agrobacterium radiobacter).